A 139-amino-acid chain; its full sequence is Oocyte zinc finger protein XlCOF14 (139 aa).

5 consecutive C2H2-type zinc fingers follow at residues 6–28 (FICSECGKSFMDKRYLKIHSNVH), 33–55 (FPCTECGKSFAAKQNLKRHQKIH), 61–83 (HKCTECGKQFLQKNKLDRHHLSH), 89–111 (FSCFECGEQFTWKHLLQYHQLSH), and 117–139 (FVCSECGKGYKTKASLALHCHIH).

The protein belongs to the krueppel C2H2-type zinc-finger protein family.

The protein localises to the nucleus. In terms of biological role, may be involved in transcriptional regulation. This Xenopus laevis (African clawed frog) protein is Oocyte zinc finger protein XlCOF14.